Reading from the N-terminus, the 319-residue chain is MTHSPVVIIGSGPAAHTAAIYLSRAEIKPTLYEGMMANGIAAGGQLTTTTEIENFPGFPDGIMGSQLMEDMRKQSIRFGTEIITETVSKVDLSQRPFKYWTEFNEDEEPHTADAIILATGASAKRLSLPGEDQYWQQGISACAVCDGAVPIFRNKPLAVVGGGDSAAEEALFLTKYGSKVYVIVRKDKLRASAVMAKRLASHPKVEILFNHVSIEAKGDGKLLNALEIENTLTGEKRDLEVNGLFYAIGHIPATSIVKGQVETDEEGYVVTVPGTANTSVKGVFAAGDVQDKRYRQAITSAGTGCMAALDCEKLLAEEE.

Residues 11 to 14, 40 to 41, glutamine 45, asparagine 54, valine 87, cysteine 145, aspartate 288, and 295 to 297 each bind FAD; these read SGPA, IA, and RQA. Residues cysteine 142 and cysteine 145 are joined by a disulfide bond.

It belongs to the class-II pyridine nucleotide-disulfide oxidoreductase family. Homodimer. It depends on FAD as a cofactor.

It is found in the cytoplasm. It catalyses the reaction [thioredoxin]-dithiol + NADP(+) = [thioredoxin]-disulfide + NADPH + H(+). The chain is Thioredoxin reductase (TRR1) from Yarrowia lipolytica (strain CLIB 122 / E 150) (Yeast).